The primary structure comprises 284 residues: 4-diphosphocytidyl-2-C-methyl-D-erythritol kinase (284 aa).

Lys14 is an active-site residue. An ATP-binding site is contributed by 97–107 (PMGGGVGGGSS). The active site involves Asp139.

It belongs to the GHMP kinase family. IspE subfamily.

It carries out the reaction 4-CDP-2-C-methyl-D-erythritol + ATP = 4-CDP-2-C-methyl-D-erythritol 2-phosphate + ADP + H(+). Its pathway is isoprenoid biosynthesis; isopentenyl diphosphate biosynthesis via DXP pathway; isopentenyl diphosphate from 1-deoxy-D-xylulose 5-phosphate: step 3/6. Functionally, catalyzes the phosphorylation of the position 2 hydroxy group of 4-diphosphocytidyl-2C-methyl-D-erythritol. In Pseudoalteromonas translucida (strain TAC 125), this protein is 4-diphosphocytidyl-2-C-methyl-D-erythritol kinase.